Reading from the N-terminus, the 118-residue chain is Secreted effector CSEP0064 (118 aa).

An N-terminal signal peptide occupies residues 1 to 21; it reads MRPFQLLSALAIFINLEAVEA. C27 and C113 are joined by a disulfide.

As to quaternary structure, interacts in planta with the pathogenesis-related protein PR10.

The protein localises to the secreted. It localises to the host cell. Functionally, secreted effector that increases susceptibility to infection in both monocotyledonous and dicotyledonous plants. Non-catalytic homolog of fungal RNases that binds host RNA and inhibits the degradation of host ribosomal RNA induced by ribosome-inactivating proteins (RIPs), preventing host cell death, an inviable interaction and demise of the fungus. The chain is Secreted effector CSEP0064 from Blumeria graminis f. sp. hordei (strain DH14) (Barley powdery mildew).